We begin with the raw amino-acid sequence, 301 residues long: 2-aminobenzoylacetyl-CoA thioesterase (301 aa).

The Fe cation site is built by His-69, His-71, Asp-73, His-74, His-159, Asp-178, and His-221.

It belongs to the metallo-beta-lactamase superfamily.

The catalysed reaction is (2-aminobenzoyl)acetyl-CoA + H2O = (2-aminobenzoyl)acetate + CoA + H(+). Its activity is regulated as follows. Thioesterase activity, but not pyocyanine production, is inhibited by 2-(pyridin-3-yl)benzoic acid, 2-(1H-pyrrol-1-yl)benzoic acid and 3-methylthiophene-2-carboxylic acid. Compounds bind to the active center. Required for the biosynthesis of the quorum-sensing signaling molecules 2-heptyl-4(1H)-quinolone (HHQ) and 2-heptyl-3-hydroxy-4(1H)-quinolone (Pseudomonas quinolone signal or PQS), which are important for biofilm formation and virulence. Catalyzes the hydrolysis of the intermediate 2-aminobenzoylacetyl-CoA (2-ABA-CoA) to form 2-aminobenzoylacetate (2-ABA), the precursor of HHQ. In vitro, can also hydrolyze other substrates such as S-ethyl-acetothioacetate and acetoacetyl-CoA, but is inactive against anthraniloyl-CoA, malonyl-CoA and octanoyl-CoA. Beyond its thioesterase function, is involved in the regulation of diverse genes coding for key virulence determinants and biofilm development. The protein is 2-aminobenzoylacetyl-CoA thioesterase of Pseudomonas aeruginosa (strain ATCC 15692 / DSM 22644 / CIP 104116 / JCM 14847 / LMG 12228 / 1C / PRS 101 / PAO1).